The chain runs to 388 residues: Myosin light chain kinase family member 4 (388 aa).

Positions 106–361 constitute a Protein kinase domain; that stretch reads VSKTEILGGG…ASEALKHPWL (256 aa). ATP-binding positions include 112-120 and lysine 135; that span reads LGGGRFGQV. Aspartate 227 (proton acceptor) is an active-site residue.

Belongs to the protein kinase superfamily. CAMK Ser/Thr protein kinase family.

It catalyses the reaction L-seryl-[protein] + ATP = O-phospho-L-seryl-[protein] + ADP + H(+). The catalysed reaction is L-threonyl-[protein] + ATP = O-phospho-L-threonyl-[protein] + ADP + H(+). The polypeptide is Myosin light chain kinase family member 4 (MYLK4) (Homo sapiens (Human)).